An 896-amino-acid polypeptide reads, in one-letter code: Protein translocase subunit SecA (896 aa).

Residues Q87, 105 to 109 (GEGKT), and D512 contribute to the ATP site. The disordered stretch occupies residues 858–886 (RAGGEAEAAKPVVRDEKKVGRNDPCPCGS). Over residues 869-878 (VVRDEKKVGR) the composition is skewed to basic and acidic residues. 4 residues coordinate Zn(2+): C882, C884, C893, and C894.

It belongs to the SecA family. As to quaternary structure, monomer and homodimer. Part of the essential Sec protein translocation apparatus which comprises SecA, SecYEG and auxiliary proteins SecDF-YajC and YidC. Zn(2+) serves as cofactor.

Its subcellular location is the cell inner membrane. The protein resides in the cytoplasm. The catalysed reaction is ATP + H2O + cellular proteinSide 1 = ADP + phosphate + cellular proteinSide 2.. Functionally, part of the Sec protein translocase complex. Interacts with the SecYEG preprotein conducting channel. Has a central role in coupling the hydrolysis of ATP to the transfer of proteins into and across the cell membrane, serving as an ATP-driven molecular motor driving the stepwise translocation of polypeptide chains across the membrane. This Syntrophotalea carbinolica (strain DSM 2380 / NBRC 103641 / GraBd1) (Pelobacter carbinolicus) protein is Protein translocase subunit SecA.